Consider the following 142-residue polypeptide: Cytidine deaminase (142 aa).

One can recognise a CMP/dCMP-type deaminase domain in the interval 9 to 139 (RQLEALKRAA…ELLPMAFGPS (131 aa)). 50-52 (NVE) is a binding site for substrate. Position 61 (C61) interacts with Zn(2+). Catalysis depends on E63, which acts as the Proton donor. 2 residues coordinate Zn(2+): C96 and C99.

The protein belongs to the cytidine and deoxycytidylate deaminase family. Homodimer. Requires Zn(2+) as cofactor.

The catalysed reaction is cytidine + H2O + H(+) = uridine + NH4(+). It catalyses the reaction 2'-deoxycytidine + H2O + H(+) = 2'-deoxyuridine + NH4(+). In terms of biological role, this enzyme scavenges exogenous and endogenous cytidine and 2'-deoxycytidine for UMP synthesis. The sequence is that of Cytidine deaminase (CDD1) from Saccharomyces cerevisiae (strain ATCC 204508 / S288c) (Baker's yeast).